The sequence spans 115 residues: Arsenic resistance transcriptional regulator ArsR2 (115 aa).

Residues 1–90 (MITPPDVFKS…EMLQVTLQAN (90 aa)) form the HTH arsR-type domain. Residues cysteine 30 and cysteine 32 each coordinate arsenite. Positions 31–54 (VCELMCALNDSQPKISRHLAQLRS) form a DNA-binding region, H-T-H motif.

Homodimer.

Its subcellular location is the cytoplasm. In terms of biological role, binds arsenite and regulates the expression of arsenic efflux pumps. In vitro, also binds antimony and bismuth, but not arsenate. This chain is Arsenic resistance transcriptional regulator ArsR2, found in Pseudomonas putida (strain ATCC 47054 / DSM 6125 / CFBP 8728 / NCIMB 11950 / KT2440).